A 666-amino-acid chain; its full sequence is DNA mismatch repair protein MutL (666 aa).

Belongs to the DNA mismatch repair MutL/HexB family.

In terms of biological role, this protein is involved in the repair of mismatches in DNA. It is required for dam-dependent methyl-directed DNA mismatch repair. May act as a 'molecular matchmaker', a protein that promotes the formation of a stable complex between two or more DNA-binding proteins in an ATP-dependent manner without itself being part of a final effector complex. The chain is DNA mismatch repair protein MutL from Clostridium botulinum (strain Langeland / NCTC 10281 / Type F).